The following is a 378-amino-acid chain: Response regulator aspartate phosphatase A (378 aa).

6 TPR repeats span residues 101–137 (YYFNFFRGMYEFKQKMFVSAMMYYKRAEKNLALVSDD), 148–181 (AEIFYNLKQTYVSMSYAVQALETYQMYETYTVRR), 183–215 (QCEFVIAGNYDDMQYPERALPHLELALDLAKKE), 222–255 (SSALYNLGNCYEKMGELQKAAEYFGKSVSICKSE), 261–294 (PHSIYSLTQVLYKQKNDAEAQKKYREGLEIARQY), and 336–369 (EELAHDAAQFYIENGQPEKALSFYEKMVHAQKQI).

Belongs to the Rap family. In terms of assembly, homodimer. Interacts with its substrate, phosphorylated Spo0F, and its inhibitor, the PhrA pentapeptide. The RapA dimer forms a stable complex with two molecules of phosphorylated Spo0F. The complex is dissociated after dephosphorylation of Spo0F by RapA. It depends on Mn(2+) as a cofactor.

Its subcellular location is the cytoplasm. Phosphatase activity is inhibited by the phosphatase regulator PhrA. Interaction with PhrA dissociates the RapA-Spo0F complex. Activity is abolished in the presence of EDTA. Functionally, involved in the regulation of sporulation. Acts as a phosphatase that specifically dephosphorylates the sporulation initiation phosphotransferase Spo0F and inhibits its activity. The protein is Response regulator aspartate phosphatase A of Bacillus subtilis (strain 168).